A 250-amino-acid polypeptide reads, in one-letter code: Probable aquaporin TIP-type (250 aa).

Helical transmembrane passes span 22-42 and 56-76; these read AGLAEFISTFIFVFAGSGSGI and AGLISASIAHAFALFVAVSVG. The NPA 1 motif lies at 85–87; sequence NPA. The next 3 helical transmembrane spans lie at 104–124, 138–158, and 170–190; these read IVYIIAQLLGSIVASALLVFV, VGVGPALVLEIVMTFGLVYTV, and IGIIAPIAIGFIVGANILVGG. The NPA 2 signature appears at 198–200; it reads NPA. A helical transmembrane segment spans residues 218-238; it reads YWAGPLIGGGIAGLVYEVLFI.

This sequence belongs to the MIP/aquaporin (TC 1.A.8) family. TIP (TC 1.A.8.10) subfamily.

The protein resides in the membrane. Functionally, aquaporins facilitate the transport of water and small neutral solutes across cell membranes. May have a role in buffering osmotic fluctations in the highly compartmented vacuole of arbuscule cells. The chain is Probable aquaporin TIP-type (AQP1) from Medicago truncatula (Barrel medic).